We begin with the raw amino-acid sequence, 367 residues long: MSDYTQQLQDKKDHLKTLFAGLDVPEWEVYESPDKHYRMRAEFRIWHEGGEMFYAMFEKGQKAGGASLIRCDRFEAASEAVNRLMPELIAVAAQSAELRNRWYAVEFLSTLSGEMLVTMIYHKRLDNEWMQAAQALQQQLDISVIGRSRGQKIVLKQDYVTETLKVGNRDFRYRQIEGSFTQPNAAVCQKMLEWACGAAEGLDGDLLELYCGNGNFTLPLSEKFERVLATEISKTSVSAAQWNIEANRIGNIKIARLSAEEFTEAYTGKREFKRLKDGGIALTDYAFSTIFVDPPRAGIDEETLKLVSQFDNIIYISCNPETLRTNLDTLAETHTVERAALFDQFPFTHHIESGVLLKKKILGKSKR.

Residues Gln-182, Tyr-210, Asn-215, Glu-231, and Asp-293 each coordinate S-adenosyl-L-methionine. Catalysis depends on Cys-318, which acts as the Nucleophile. Catalysis depends on Glu-352, which acts as the Proton acceptor.

The protein belongs to the class I-like SAM-binding methyltransferase superfamily. RNA M5U methyltransferase family. TrmA subfamily.

The catalysed reaction is uridine(54) in tRNA + S-adenosyl-L-methionine = 5-methyluridine(54) in tRNA + S-adenosyl-L-homocysteine + H(+). It catalyses the reaction uridine(341) in tmRNA + S-adenosyl-L-methionine = 5-methyluridine(341) in tmRNA + S-adenosyl-L-homocysteine + H(+). Its function is as follows. Dual-specificity methyltransferase that catalyzes the formation of 5-methyluridine at position 54 (m5U54) in all tRNAs, and that of position 341 (m5U341) in tmRNA (transfer-mRNA). This Neisseria meningitidis serogroup C (strain 053442) protein is tRNA/tmRNA (uracil-C(5))-methyltransferase.